Consider the following 177-residue polypeptide: Cell division inhibitor SulA (177 aa).

Residues 112-118 (ALASGNY) form a ftsZ binding region. Positions 170–177 (KIHSIHYH) are lon protease binding.

The protein belongs to the SulA family. In terms of assembly, interacts with FtsZ. Post-translationally, is rapidly cleaved and degraded by the Lon protease once DNA damage is repaired.

Its function is as follows. Component of the SOS system and an inhibitor of cell division. Accumulation of SulA causes rapid cessation of cell division and the appearance of long, non-septate filaments. In the presence of GTP, binds a polymerization-competent form of FtsZ in a 1:1 ratio, thus inhibiting FtsZ polymerization and therefore preventing it from participating in the assembly of the Z ring. This mechanism prevents the premature segregation of damaged DNA to daughter cells during cell division. This Photorhabdus laumondii subsp. laumondii (strain DSM 15139 / CIP 105565 / TT01) (Photorhabdus luminescens subsp. laumondii) protein is Cell division inhibitor SulA.